The primary structure comprises 94 residues: uncharacterized protein (94 aa).

2 consecutive transmembrane segments (helical) span residues 7 to 24 and 39 to 61; these read IFFI…SFNV and AVPI…LLFL. The disordered stretch occupies residues 68–94; that stretch reads TRKQKREDSPTSAPTGGVSSPEHVDVP.

The protein localises to the cell membrane. This is an uncharacterized protein from Treponema pallidum (strain Nichols).